Reading from the N-terminus, the 381-residue chain is Ubiquitin-associated protein 1-like (381 aa).

In terms of domain architecture, UMA spans 4-50 (LDGVPFKLPKGFVIGTEPLPGPELSVPACGEVLLGSMHDFSLERTAL). Disordered regions lie at residues 87–141 (LAPA…PGRR) and 185–228 (SLCP…LRSH). Residues 95–104 (RDPEAGHQER) are compositionally biased toward basic and acidic residues. The span at 105-123 (PEEEGEDEAEASSGSEEEP) shows a compositional bias: acidic residues. The span at 124-141 (APSSLQPGSPASPGPGRR) shows a compositional bias: low complexity. The span at 197 to 216 (ASPPGPAPQHPAAPASPPRP) shows a compositional bias: pro residues.

The protein is Ubiquitin-associated protein 1-like (UBAP1L) of Homo sapiens (Human).